A 1286-amino-acid chain; its full sequence is Ankyrin-repeat and fibronectin type III domain-containing 1 (1286 aa).

2 ANK repeats span residues 274 to 303 and 311 to 340; these read QGNE…PEEL and EGLT…RESP. Residues 411 to 507 enclose the Fibronectin type-III domain; it reads VPANACLMVS…TTTPVCASPS (97 aa). Residues 748-755 are highly conserved peptide sequence; the sequence is GLYLGYLK. Residues 999-1011 are compositionally biased toward polar residues; it reads SSHIDCLPSTSPS. Disordered stretches follow at residues 999 to 1032, 1086 to 1106, 1187 to 1207, and 1242 to 1286; these read SSHI…EEGC, KASM…DTDH, AEDP…RGLP, and AGQD…SSML. The segment covering 1260–1277 has biased composition (low complexity); sequence SSLPSSTSSEMSPDPTSP.

In terms of tissue distribution, expressed in both the suprachiasmatic nucleus and dorsal medial hypothalamus.

Its function is as follows. May play a role in neuronal function. The polypeptide is Ankyrin-repeat and fibronectin type III domain-containing 1 (Mus musculus (Mouse)).